The sequence spans 995 residues: Polyprotein nsP1234 (995 aa).

ADP-D-ribose is bound by residues G30 and F32. 4 residues coordinate Zn(2+): C180, C182, C205, and C223. 2 short sequence motifs (FGDF; binding to host G3BP1) span residues 347–350 (FGDL) and 364–367 (FGDF). A RdRp catalytic domain is found at 749-864 (DAVLETDIAS…HGVKSDKLLA (116 aa)).

In terms of assembly, interacts with mRNA-capping enzyme nsP1. Interacts with host DDX1. Interacts with host DDX3. Interacts (via C-terminus) with host G3BP1; this interaction inhibits the formation of host stress granules on viral mRNAs and the nsp3-G3BP1 complexes bind viral RNAs and probably orchestrate the assembly of viral replication complexes. Interacts (via C-terminus) with host G3BP2; this interaction inhibits the formation of host stress granules on viral mRNAs and the nsp3-G3BP2 complexes bind viral RNAs and probably orchestrate the assembly of viral replication complexes. Interacts with mRNA-capping enzyme nsP1. Interacts with protease nsP2. interacts with itself. It depends on Mg(2+) as a cofactor. The cofactor is Mn(2+). Post-translationally, polyprotein P1234: Specific enzymatic cleavages in vivo yield mature proteins. The processing of the polyprotein is temporally regulated. In early stages (1.7 hpi), P1234 is first cleaved in trans through its nsP2 protease activity, releasing P123' and nsP4, which associate to form the early replication complex. At the same time, P1234 is also cut at the nsP1/nsP2 site early in infection but with lower efficiency. After replication of the viral minus-strand RNAs (4 hpi), the polyproteins are cut at the nsP1/nsP2 and nsP2/nsP3 sites very efficiently, preventing accumulation of P123' and P1234 and allowing the formation of the late replication complex. NsP3'/nsP4 site is not cleaved anymore and P34 is produced rather than nsP4. In terms of processing, specific enzymatic cleavages in vivo yield mature proteins. The processing of the polyprotein is temporally regulated. In early stages (1.7 hpi), P123 is cleaved at the nsP1/nsP2 site with low efficiency. After replication of the viral minus-strand RNAs (4 hpi), the polyproteins are cut at the nsP1/nsP2 and nsP2/nsP3 sites very efficiently, preventing accumulation of P123 and allowing the formation of the late replication complex. Specific enzymatic cleavages in vivo yield mature proteins. The processing of the polyprotein is temporally regulated. In early stages (1.7 hpi), P123' is cleaved at the nsP1/nsP2 site with low efficiency. After replication of the viral minus-strand RNAs (4 hpi), the polyproteins are cut at the nsP1/nsP2 and nsP2/nsP3 sites very efficiently, preventing accumulation of P123' and allowing the formation of the late replication complex. Post-translationally, phosphorylated by host on serines and threonines. In terms of processing, ubiquitinated; targets the protein for rapid degradation via the ubiquitin system. Nsp4 is present in extremely low quantities due to low frequency of translation through the amber stop-codon and the degradation by the ubiquitin pathway.

It is found in the host cytoplasmic vesicle membrane. The catalysed reaction is RNA(n) + a ribonucleoside 5'-triphosphate = RNA(n+1) + diphosphate. It catalyses the reaction RNA(n) + ATP = RNA(n)-3'-adenine ribonucleotide + diphosphate. It carries out the reaction 4-O-(ADP-D-ribosyl)-L-aspartyl-[protein] + H2O = L-aspartyl-[protein] + ADP-D-ribose + H(+). The enzyme catalyses 5-O-(ADP-D-ribosyl)-L-glutamyl-[protein] + H2O = L-glutamyl-[protein] + ADP-D-ribose + H(+). The catalysed reaction is ADP-alpha-D-ribose 1''-phosphate + H2O = ADP-D-ribose + phosphate. In terms of biological role, polyprotein P1234: Inactive precursor of the viral replicase, which is activated by cleavages carried out by the viral protease nsP2. Its function is as follows. The early replication complex formed by the polyprotein P123 and nsP4 synthesizes minus-strand RNAs. As soon P123 is cleaved into mature proteins, the plus-strand RNAs synthesis begins. The early replication complex formed by the polyprotein P123' and nsP4 synthesizes minus-strand RNAs. Polyprotein P123' is a short-lived polyprotein that accumulates during early stage of infection. As soon P123' is cleaved into mature proteins, the plus-strand RNAs synthesis begins. Functionally, seems to be essential for minus-strand RNAs and subgenomic 26S mRNAs synthesis. Displays mono-ADP-ribosylhydrolase activity. ADP-ribosylation is a post-translational modification that controls various processes of the host cell and the virus probably needs to revert it for optimal viral replication. Binds proteins of FXR family and sequesters them into the viral RNA replication complexes thereby inhibiting the formation of host stress granules on viral mRNAs. The nsp3'-FXR complexes bind viral RNAs and probably orchestrate the assembly of viral replication complexes, thanks to the ability of FXR family members to self-assemble and bind DNA. In terms of biological role, seems to be essential for minus-strand RNAs and subgenomic 26S mRNAs synthesis. Displays mono-ADP-ribosylhydrolase activity. ADP-ribosylation is a post-translantional modification that controls various processes of the host cell and the virus probably needs to revert it for optimal viral replication. Binds proteins of G3BP family and sequesters them into the viral RNA replication complexes thereby inhibiting the formation of host stress granules on viral mRNAs. The nsp3-G3BP complexes bind viral RNAs and probably orchestrate the assembly of viral replication complexes, thanks to the ability of G3BP family members to self-assemble and bind DNA. Its function is as follows. RNA dependent RNA polymerase. Replicates genomic and antigenomic RNA by recognizing replications specific signals. The early replication complex formed by the polyprotein P123 and nsP4 synthesizes minus-strand RNAs. The late replication complex composed of fully processed nsP1-nsP4 is responsible for the production of genomic and subgenomic plus-strand RNAs. The core catalytic domain of nsP4 also possesses terminal adenylyltransferase (TATase) activity that is probably involved in maintenance and repair of the poly(A) tail, an element required for replication of the viral genome. The sequence is that of Polyprotein nsP1234 from Middelburg virus.